The chain runs to 210 residues: Phosphate propanoyltransferase (210 aa).

26–28 contributes to the CoA binding site; sequence VSN. Histidine 30 and histidine 32 together coordinate Zn(2+). Lysine 71 and arginine 78 together coordinate CoA. Arginine 84 serves as a coordination point for phosphate. The Zn(2+) site is built by glutamate 90, histidine 138, histidine 140, and histidine 186. Asparagine 193 serves as a coordination point for CoA.

It belongs to the PduL family. Monomer, when purified in the absence of the encapsulation peptide (EP, residues 1-27). The EP may influence oligomerization. Zn(2+) serves as cofactor.

The protein resides in the bacterial microcompartment. It carries out the reaction propanoyl-CoA + phosphate = propanoyl phosphate + CoA. It functions in the pathway polyol metabolism; 1,2-propanediol degradation. Its function is as follows. Involved in 1,2-propanediol (1,2-PD) utilization in the bacterial microcompartment (BMC) dedicated to 1,2-PD degradation by catalyzing the conversion of propanoyl-CoA to propanoyl-phosphate. Also able to catalyze the reverse reaction. Also has phosphate acetyltransferase activity to a lesser extent. Required for optimal growth on 1,2-PD when the BMC is intact. CoA is regenerated within the BMC (for use by PduP) via this enzyme, although there must also be cofactor transport across the BMC. Directly targeted to the BMC. The 1,2-PD-specific bacterial microcompartment (BMC) concentrates low levels of 1,2-PD catabolic enzymes, concentrates volatile reaction intermediates thus enhancing pathway flux and keeps the level of toxic, mutagenic propionaldehyde low. The chain is Phosphate propanoyltransferase from Salmonella typhimurium (strain LT2 / SGSC1412 / ATCC 700720).